The primary structure comprises 320 residues: Probable cell division protein WhiA (320 aa).

A DNA-binding region (H-T-H motif) is located at residues 276–310; sequence TLKELGELVSGGKISKSGINHRLRKIDEIAERLRA.

This sequence belongs to the WhiA family.

Involved in cell division and chromosome segregation. In Geobacillus sp. (strain WCH70), this protein is Probable cell division protein WhiA.